The sequence spans 153 residues: Interleukin-4 (153 aa).

Positions 1–24 are cleaved as a signal peptide; it reads MGLTSQLLPPLFFLLACAGNFAHG. 3 disulfide bridges follow: Cys27–Cys151, Cys48–Cys89, and Cys70–Cys123. The N-linked (GlcNAc...) asparagine glycan is linked to Asn62.

Belongs to the IL-4/IL-13 family.

The protein resides in the secreted. Its function is as follows. Participates in at least several B-cell activation processes as well as of other cell types. It is a costimulator of DNA-synthesis. It induces the expression of class II MHC molecules on resting B-cells. It enhances both secretion and cell surface expression of IgE and IgG1. It also regulates the expression of the low affinity Fc receptor for IgE (CD23) on both lymphocytes and monocytes. Positively regulates IL31RA expression in macrophages. Stimulates autophagy in dendritic cells by interfering with mTORC1 signaling and through the induction of RUFY4. This is Interleukin-4 (IL4) from Cercocebus atys (Sooty mangabey).